The primary structure comprises 122 residues: Large ribosomal subunit protein uL14 (122 aa).

This sequence belongs to the universal ribosomal protein uL14 family. Part of the 50S ribosomal subunit. Forms a cluster with proteins L3 and L19. In the 70S ribosome, L14 and L19 interact and together make contacts with the 16S rRNA in bridges B5 and B8.

Its function is as follows. Binds to 23S rRNA. Forms part of two intersubunit bridges in the 70S ribosome. This Aeromonas salmonicida (strain A449) protein is Large ribosomal subunit protein uL14.